A 284-amino-acid chain; its full sequence is D-tagatose-1,6-bisphosphate aldolase subunit GatY (284 aa).

The Proton donor role is filled by Asp82. His83 and His180 together coordinate Zn(2+). Position 181 (Gly181) interacts with dihydroxyacetone phosphate. His208 contacts Zn(2+). Dihydroxyacetone phosphate-binding positions include 209–211 (GAS) and 230–233 (NVAT).

This sequence belongs to the class II fructose-bisphosphate aldolase family. TagBP aldolase GatY subfamily. In terms of assembly, forms a complex with GatZ. The cofactor is Zn(2+).

It catalyses the reaction D-tagatofuranose 1,6-bisphosphate = D-glyceraldehyde 3-phosphate + dihydroxyacetone phosphate. Its pathway is carbohydrate metabolism; D-tagatose 6-phosphate degradation; D-glyceraldehyde 3-phosphate and glycerone phosphate from D-tagatose 6-phosphate: step 2/2. Its function is as follows. Catalytic subunit of the tagatose-1,6-bisphosphate aldolase GatYZ, which catalyzes the reversible aldol condensation of dihydroxyacetone phosphate (DHAP or glycerone-phosphate) with glyceraldehyde 3-phosphate (G3P) to produce tagatose 1,6-bisphosphate (TBP). Requires GatZ subunit for full activity and stability. Is involved in the catabolism of galactitol. The chain is D-tagatose-1,6-bisphosphate aldolase subunit GatY from Klebsiella pneumoniae subsp. pneumoniae (strain ATCC 700721 / MGH 78578).